The primary structure comprises 378 residues: Anhydro-N-acetylmuramic acid kinase (378 aa).

ATP is bound at residue 23–30 (GTSMDGAD).

It belongs to the anhydro-N-acetylmuramic acid kinase family.

It catalyses the reaction 1,6-anhydro-N-acetyl-beta-muramate + ATP + H2O = N-acetyl-D-muramate 6-phosphate + ADP + H(+). It functions in the pathway amino-sugar metabolism; 1,6-anhydro-N-acetylmuramate degradation. The protein operates within cell wall biogenesis; peptidoglycan recycling. Its function is as follows. Catalyzes the specific phosphorylation of 1,6-anhydro-N-acetylmuramic acid (anhMurNAc) with the simultaneous cleavage of the 1,6-anhydro ring, generating MurNAc-6-P. Is required for the utilization of anhMurNAc either imported from the medium or derived from its own cell wall murein, and thus plays a role in cell wall recycling. This is Anhydro-N-acetylmuramic acid kinase from Bordetella bronchiseptica (strain ATCC BAA-588 / NCTC 13252 / RB50) (Alcaligenes bronchisepticus).